We begin with the raw amino-acid sequence, 322 residues long: Beta-carotene 3-hydroxylase, chloroplastic (322 aa).

Residues 1 to 68 (TFHKPVSGAS…AQRCSLVRLR (68 aa)) constitute a chloroplast transit peptide. 2 helical membrane passes run 118–138 (QAAAIAASIGVSGIAIFATYL) and 149–169 (AVPWGEVAGTLLLVVGGALGM). The Fatty acid hydroxylase domain maps to 164-286 (GGALGMEMYA…AHQLHHSGKY (123 aa)). The Histidine box-1 motif lies at 177 to 182 (HKAIWH). The short motif at 191–195 (HKSHH) is the Histidine box-2 element. 2 helical membrane-spanning segments follow: residues 207–227 (LFAIINGLPAMLLCTFGFWLP) and 231–251 (GAACFGAGLGITLYGMAYMFV). The short motif at 252-257 (HDGLVH) is the Histidine box-3 element. The Histidine box-4 motif lies at 278-282 (HQLHH).

This sequence belongs to the sterol desaturase family.

The protein resides in the plastid. Its subcellular location is the chloroplast membrane. It catalyses the reaction all-trans-beta-carotene + 4 reduced [2Fe-2S]-[ferredoxin] + 2 O2 + 4 H(+) = all-trans-zeaxanthin + 4 oxidized [2Fe-2S]-[ferredoxin] + 2 H2O. In terms of biological role, nonheme diiron monooxygenase involved in the biosynthesis of astaxanthin. Hydroxylates beta-ring of beta-carotene and catalyzes the conversion of canthaxanthin to astaxanthin. Uses ferredoxin as an electron donor. This is Beta-carotene 3-hydroxylase, chloroplastic (CRTZ) from Haematococcus lacustris (Green alga).